The chain runs to 715 residues: Protein sneaky (715 aa).

Topologically, residues methionine 1–arginine 32 are cytoplasmic. The chain crosses the membrane as a helical span at residues phenylalanine 33–asparagine 53. Residues phenylalanine 54–aspartate 66 lie on the Extracellular side of the membrane. Residues leucine 67 to valine 87 form a helical membrane-spanning segment. Topologically, residues arginine 88–alanine 109 are cytoplasmic. Residues valine 110 to valine 130 traverse the membrane as a helical segment. Over alanine 131–lysine 373 the chain is Extracellular. Residues valine 374 to isoleucine 394 traverse the membrane as a helical segment. Over asparagine 395–threonine 457 the chain is Cytoplasmic. A helical transmembrane segment spans residues valine 458–isoleucine 478. The Extracellular segment spans residues aspartate 479–tyrosine 553. Residues tyrosine 554–leucine 574 form a helical membrane-spanning segment. Topologically, residues arginine 575 to lysine 715 are cytoplasmic. The RING-type; degenerate zinc finger occupies cysteine 655–cysteine 691.

In terms of tissue distribution, specifically expressed in testis.

It localises to the cytoplasmic vesicle. The protein localises to the secretory vesicle. It is found in the acrosome membrane. Its subcellular location is the cytoplasm. The protein resides in the cytoplasmic vesicle membrane. In terms of biological role, component of the sperm acrosome membrane. Required for breakdown of the sperm plasma membrane after sperm entry into the egg, which is an essential prerequisite for successful fertilization. This Drosophila melanogaster (Fruit fly) protein is Protein sneaky.